Reading from the N-terminus, the 142-residue chain is MAP3K7 C-terminal-like protein (142 aa).

Detected in lung and peripheral blood leukocytes. Expressed predominantly in peripheral blood leukocytes and ubiquitously in adult and fetal tissues. Also expressed strongly in breast carcinoma GI-101, colon adenocarcinoma GI-112, and prostatic adenocarcinoma PC3.

The sequence is that of MAP3K7 C-terminal-like protein (MAP3K7CL) from Homo sapiens (Human).